Here is a 567-residue protein sequence, read N- to C-terminus: MESSKKMDAAGTLQPNPPLKLQPDRGAGSVLVPEQGGYKEKFVKTVEDKYKCEKCRLVLCNPKQTECGHRFCESCMAALLSSSSPKCTACQESIIKDKVFKDNCCKREILALQVYCRNEGRGCAEQLTLGHLLVHLKNECQFEELPCLRADCKEKVLRKDLRDHVEKACKYREATCSHCKSQVPMIKLQKHEDTDCPCVVVSCPHKCSVQTLLRSELSAHLSECVNAPSTCSFKRYGCVFQGTNQQIKAHEASSAVQHVNLLKEWSNSLEKKVSLLQNESVEKNKSIQSLHNQICSFEIEIERQKEMLRNNESKILHLQRVIDSQAEKLKELDKEIRPFRQNWEEADSMKSSVESLQNRVTELESVDKSAGQAARNTGLLESQLSRHDQMLSVHDIRLADMDLRFQVLETASYNGVLIWKIRDYKRRKQEAVMGKTLSLYSQPFYTGYFGYKMCARVYLNGDGMGKGTHLSLFFVIMRGEYDALLPWPFKQKVTLMLMDQGSSRRHLGDAFKPDPNSSSFKKPTGEMNIASGCPVFVAQTVLENGTYIKDDTIFIKVIVDTSDLPDP.

The segment at 1-26 (MESSKKMDAAGTLQPNPPLKLQPDRG) is disordered. Residue C55 forms a Glycyl cysteine thioester (Cys-Gly) (interchain with G-Cter in ubiquitin) linkage. An RING-type zinc finger spans residues 67 to 76 (CGHRFCESCM). A Glycyl lysine isopeptide (Lys-Gly) (interchain with G-Cter in ubiquitin) cross-link involves residue K106. A Glycyl cysteine thioester (Cys-Gly) (interchain with G-Cter in ubiquitin) cross-link involves residue C123. 2 TRAF-type zinc fingers span residues 134 to 189 (VHLK…IKLQ) and 190 to 248 (KHED…QQIK). Residues K155 and K167 each participate in a glycyl lysine isopeptide (Lys-Gly) (interchain with G-Cter in ubiquitin) cross-link. A coiled-coil region spans residues 266–337 (SNSLEKKVSL…KLKELDKEIR (72 aa)). K328 is covalently cross-linked (Glycyl lysine isopeptide (Lys-Gly) (interchain with G-Cter in ubiquitin)). The MATH domain occupies 414–559 (NGVLIWKIRD…DDTIFIKVIV (146 aa)).

It belongs to the TNF receptor-associated factor family. A subfamily. In terms of assembly, homotrimer. Heterotrimer with TRAF2 and TRAF5. Interacts with LTBR/TNFRSF3, TNFRSF4, TNFRSF5/CD40, TNFRSF8/CD30, TNFRSF13C TNFRSF17/BCMA, TLR4 and EDAR. Interacts with MAP3K5, MAP3K14, TRAIP/TRIP, TDP2/TTRAP, TANK/ITRAF and TRAF3IP1. Interaction with TNFRSF5/CD40 is modulated by TANK/ITRAF, which competes for the same binding site. Interacts with TICAM1. Interacts with TRAFD1. Interacts with OTUB1, OTUB2 and OTUD5. Interacts with RNF216, OPTN and TBK1. Identified in a complex with TRAF2, MAP3K14 and BIRC3. Upon exposure to bacterial lipopolysaccharide (LPS), recruited to a transient complex containing TLR4, TRAF3, TRAF6, IKBKG, MAP3K7, MYD88, TICAM1, BIRC2, BIRC3 and UBE2N. Interacts (via RING-type zinc finger domain) with SRC. Interacts with CARD14. Interacts (via MATH domain) with PTPN22; the interaction promotes TRAF3 polyubiquitination. Interacts with MAVS. Directly interacts with DDX3X; this interaction stimulates TRAF3 'Lys-63' ubiquitination. Interacts with IRF3. Interacts with IKBKE in the course of viral infection. Interacts with TRIM35. Interacts with GAPDH; promoting TRAF3 ubiquitination. Interacts with PPP3CA and PPP3CB. Interacts with RALGDS. Interacts with FBXO11. In terms of processing, undergoes 'Lys-48'-linked polyubiquitination, leading to its proteasomal degradation in response to signaling by TNFSF13B, TLR4 or through CD40. 'Lys-48'-linked polyubiquitinated form is deubiquitinated by OTUD7B, preventing TRAF3 proteolysis and over-activation of non-canonical NF-kappa-B. Undergoes 'Lys-63'-linked ubiquitination during early stages of virus infection, and 'Lys-48'-linked ubiquitination during later stages. Undergoes both 'Lys-48'-linked and 'Lys-63'-linked ubiquitination in response to TLR3 and TLR4 signaling. 'Lys-63'-linked ubiquitination can be mediated by TRIM35. Deubiquitinated by OTUB1, OTUB2 and OTUD5. Undergoes 'Lys-63'-linked deubiquitination by MYSM1 to terminate the pattern-recognition receptors/PRRs pathways. Ubiquitinated at Lys-328 by the SCF(FBXL2) complex, leading to its degradation by the proteasome. Undergoes 'Lys-48'-linked polyubiquitination, leading to its proteasomal degradation in response to signaling by TNFSF13B, TLR4 or through CD40. 'Lys-48'-linked polyubiquitinated form is deubiquitinated by OTUD7B, preventing TRAF3 proteolysis and over-activation of non-canonical NF-kappa-B. Undergoes 'Lys-63'-linked ubiquitination during early stages of virus infection, and 'Lys-48'-linked ubiquitination during later stages. Undergoes both 'Lys-48'-linked and 'Lys-63'-linked ubiquitination in response to TLR3 and TLR4 signaling. 'Lys-63'-linked ubiquitination can be mediated by TRIM35. Deubiquitinated by OTUB1, OTUB2 and OTUD5. Undergoes 'Lys-63'-linked deubiquitination by MYSM1 to terminate the pattern-recognition receptors/PRRs pathways. Also undergoes 'Lys-29'-linked ubiquitination on Cys-55 and Cys-123 by NEDD4L; leading to increased 'Lys-48'- and 'Lys-63'-linked ubiquitination as well as increased binding to TBK1. TLR4 signals emanating from bacteria containing vesicles trigger 'Lys-33'-linked polyubiquitination that promotes the assembly of the exocyst complex thereby connecting innate immune signaling to the cellular trafficking apparatus. Deubiquitinated by USP25 during viral infection, leading to TRAF3 stabilization and type I interferon production. 'Lys-63'-linked ubiquitination by FBXO11 in a NEDD8-dependent manner promotes the amplification of IFN-I signaling. Detected in bone marrow macrophages and spleen B-cells (at protein level). In adult, highest in brain. Also found in kidney, heart, thymus, spleen, lung, muscle, testis and ovary. Not found in liver.

It localises to the cytoplasm. Its subcellular location is the endosome. The protein resides in the mitochondrion. It carries out the reaction S-ubiquitinyl-[E2 ubiquitin-conjugating enzyme]-L-cysteine + [acceptor protein]-L-lysine = [E2 ubiquitin-conjugating enzyme]-L-cysteine + N(6)-ubiquitinyl-[acceptor protein]-L-lysine.. Its function is as follows. Cytoplasmic E3 ubiquitin ligase that regulates various signaling pathways, such as the NF-kappa-B, mitogen-activated protein kinase (MAPK) and interferon regulatory factor (IRF) pathways, and thus controls a lot of biological processes in both immune and non-immune cell types. In TLR and RLR signaling pathways, acts as an E3 ubiquitin ligase promoting the synthesis of 'Lys-63'-linked polyubiquitin chains on several substrates such as ASC that lead to the activation of the type I interferon response or the inflammasome. Following the activation of certain TLRs such as TLR4, acts as a negative NF-kappa-B regulator, possibly to avoid unregulated inflammatory response, and its degradation via 'Lys-48'-linked polyubiquitination is required for MAPK activation and production of inflammatory cytokines. Alternatively, when TLR4 orchestrates bacterial expulsion, TRAF3 undergoes 'Lys-33'-linked polyubiquitination and subsequently binds to RALGDS, mobilizing the exocyst complex to rapidly expel intracellular bacteria back for clearance. Also acts as a constitutive negative regulator of the alternative NF-kappa-B pathway, which controls B-cell survival and lymphoid organ development. Required for normal antibody isotype switching from IgM to IgG. Plays a role T-cell dependent immune responses. Down-regulates proteolytic processing of NFKB2, and thereby inhibits non-canonical activation of NF-kappa-B. Promotes ubiquitination and proteasomal degradation of MAP3K14. This is TNF receptor-associated factor 3 from Mus musculus (Mouse).